The following is a 201-amino-acid chain: dCTP deaminase, dUMP-forming (201 aa).

Residues 101 to 106 (KSSLGR), Asp-119, 127 to 129 (TLE), Gln-148, Tyr-162, and Gln-174 each bind dCTP. Glu-129 functions as the Proton donor/acceptor in the catalytic mechanism.

This sequence belongs to the dCTP deaminase family. Homotrimer.

The enzyme catalyses dCTP + 2 H2O = dUMP + NH4(+) + diphosphate. Its pathway is pyrimidine metabolism; dUMP biosynthesis; dUMP from dCTP: step 1/1. Its function is as follows. Bifunctional enzyme that catalyzes both the deamination of dCTP to dUTP and the hydrolysis of dUTP to dUMP without releasing the toxic dUTP intermediate. The polypeptide is dCTP deaminase, dUMP-forming (Parafrankia sp. (strain EAN1pec)).